The sequence spans 334 residues: Probable 3-hydroxyisobutyrate dehydrogenase-like 1, mitochondrial (334 aa).

The transit peptide at 1-23 (MPLLLRRFPSPSVVSSFFLRRSM) directs the protein to the mitochondrion. A24 bears the N-acetylalanine mark. Residues 38–67 (TKIGWIGTGVMGRSMCGHLIKAGYTVTVFN) and T133 each bind NAD(+). The active site involves K207. K275 provides a ligand contact to NAD(+).

The protein belongs to the HIBADH-related family. 3-hydroxyisobutyrate dehydrogenase subfamily.

It localises to the mitochondrion. It carries out the reaction 3-hydroxy-2-methylpropanoate + NAD(+) = 2-methyl-3-oxopropanoate + NADH + H(+). Its pathway is amino-acid degradation; L-valine degradation. The protein is Probable 3-hydroxyisobutyrate dehydrogenase-like 1, mitochondrial of Arabidopsis thaliana (Mouse-ear cress).